Consider the following 339-residue polypeptide: Tetraacyldisaccharide 4'-kinase (339 aa).

62-69 (VAGGTGKT) contributes to the ATP binding site.

Belongs to the LpxK family.

It carries out the reaction a lipid A disaccharide + ATP = a lipid IVA + ADP + H(+). It participates in glycolipid biosynthesis; lipid IV(A) biosynthesis; lipid IV(A) from (3R)-3-hydroxytetradecanoyl-[acyl-carrier-protein] and UDP-N-acetyl-alpha-D-glucosamine: step 6/6. Transfers the gamma-phosphate of ATP to the 4'-position of a tetraacyldisaccharide 1-phosphate intermediate (termed DS-1-P) to form tetraacyldisaccharide 1,4'-bis-phosphate (lipid IVA). The polypeptide is Tetraacyldisaccharide 4'-kinase (Xylella fastidiosa (strain 9a5c)).